Reading from the N-terminus, the 901-residue chain is Protein translocase subunit SecA (901 aa).

Residues Gln-87, 105 to 109 (GEGKT), and Asp-512 contribute to the ATP site. Zn(2+) contacts are provided by Cys-885, Cys-887, Cys-896, and His-897.

It belongs to the SecA family. As to quaternary structure, monomer and homodimer. Part of the essential Sec protein translocation apparatus which comprises SecA, SecYEG and auxiliary proteins SecDF-YajC and YidC. The cofactor is Zn(2+).

Its subcellular location is the cell inner membrane. It is found in the cytoplasm. It catalyses the reaction ATP + H2O + cellular proteinSide 1 = ADP + phosphate + cellular proteinSide 2.. Part of the Sec protein translocase complex. Interacts with the SecYEG preprotein conducting channel. Has a central role in coupling the hydrolysis of ATP to the transfer of proteins into and across the cell membrane, serving both as a receptor for the preprotein-SecB complex and as an ATP-driven molecular motor driving the stepwise translocation of polypeptide chains across the membrane. In Salmonella enteritidis PT4 (strain P125109), this protein is Protein translocase subunit SecA.